The sequence spans 351 residues: UDP-N-acetylenolpyruvoylglucosamine reductase (351 aa).

The FAD-binding PCMH-type domain maps to 25-196 (HIQAQARWLL…AAVEFRLPLL (172 aa)). The active site involves R173. S246 (proton donor) is an active-site residue. Residue E343 is part of the active site.

It belongs to the MurB family. The cofactor is FAD.

The protein resides in the cytoplasm. The catalysed reaction is UDP-N-acetyl-alpha-D-muramate + NADP(+) = UDP-N-acetyl-3-O-(1-carboxyvinyl)-alpha-D-glucosamine + NADPH + H(+). The protein operates within cell wall biogenesis; peptidoglycan biosynthesis. Its function is as follows. Cell wall formation. The protein is UDP-N-acetylenolpyruvoylglucosamine reductase of Xylella fastidiosa (strain 9a5c).